The sequence spans 251 residues: N-acetylmuramoyl-L-alanine amidase CwlA (251 aa).

An N-terminal signal peptide occupies residues Met-1 to Ala-37. Residues Ile-38–His-140 enclose the N-acetylmuramoyl-L-alanine amidase domain.

The protein belongs to the N-acetylmuramoyl-L-alanine amidase 2 family.

It is found in the secreted. It carries out the reaction Hydrolyzes the link between N-acetylmuramoyl residues and L-amino acid residues in certain cell-wall glycopeptides.. Its function is as follows. Autolysins are involved in some important biological processes such as cell separation, cell-wall turnover, competence for genetic transformation, formation of the flagella and sporulation. The polypeptide is N-acetylmuramoyl-L-alanine amidase CwlA (cwlA) (Bacillus sp).